The following is a 478-amino-acid chain: tRNA-2-methylthio-N(6)-dimethylallyladenosine synthase (478 aa).

Positions 39-157 (KLVFTQTFGC…FPQLLTESIN (119 aa)) constitute an MTTase N-terminal domain. [4Fe-4S] cluster contacts are provided by Cys48, Cys84, Cys118, Cys194, Cys198, and Cys201. The Radical SAM core domain occupies 180 to 410 (RKFELKAFVN…LEAVNRISAE (231 aa)). The region spanning 410–477 (EINDGYKDRI…TFSLNGILVN (68 aa)) is the TRAM domain.

The protein belongs to the methylthiotransferase family. MiaB subfamily. Monomer. It depends on [4Fe-4S] cluster as a cofactor.

Its subcellular location is the cytoplasm. The catalysed reaction is N(6)-dimethylallyladenosine(37) in tRNA + (sulfur carrier)-SH + AH2 + 2 S-adenosyl-L-methionine = 2-methylsulfanyl-N(6)-dimethylallyladenosine(37) in tRNA + (sulfur carrier)-H + 5'-deoxyadenosine + L-methionine + A + S-adenosyl-L-homocysteine + 2 H(+). In terms of biological role, catalyzes the methylthiolation of N6-(dimethylallyl)adenosine (i(6)A), leading to the formation of 2-methylthio-N6-(dimethylallyl)adenosine (ms(2)i(6)A) at position 37 in tRNAs that read codons beginning with uridine. The sequence is that of tRNA-2-methylthio-N(6)-dimethylallyladenosine synthase from Clostridioides difficile (strain 630) (Peptoclostridium difficile).